Consider the following 732-residue polypeptide: Probable zinc transporter cis4 (732 aa).

The next 12 helical transmembrane spans lie at 52–72 (ETLG…GLEV), 79–99 (FYLI…LGIY), 111–131 (VIIA…LGTL), 163–183 (YIAF…LGYF), 189–209 (VFYA…FYLV), 219–239 (LAFL…VLPL), 240–260 (GTIN…IFCI), 268–288 (IQFY…SAII), 350–370 (IFYF…YGLW), 380–400 (AIHM…TTLA), 415–435 (IEAL…FSIV), and 453–473 (LLLV…AFNH). The interval 526-547 (HVSQHEHTHENSQEHHHEHNHN) is disordered. 2 helical membrane-spanning segments follow: residues 586-606 (IFLH…STIL) and 615-635 (FDPL…LPLI).

Belongs to the cation diffusion facilitator (CDF) transporter (TC 2.A.4) family. SLC30A subfamily. Interacts with zrg17.

It localises to the endoplasmic reticulum membrane. Its subcellular location is the golgi apparatus. The protein localises to the cis-Golgi network membrane. Functionally, probable zinc transporter involved in Golgi membrane trafficking through the regulation of zinc homeostasis. This is Probable zinc transporter cis4 (cis4) from Schizosaccharomyces pombe (strain 972 / ATCC 24843) (Fission yeast).